We begin with the raw amino-acid sequence, 625 residues long: tRNA uridine 5-carboxymethylaminomethyl modification enzyme MnmG (625 aa).

Residues 11–16 (GAGHAG), Val123, and Ser178 contribute to the FAD site. NAD(+) is bound at residue 271–285 (GPRYCPSIETKIVTF). Gln368 is a binding site for FAD.

The protein belongs to the MnmG family. In terms of assembly, homodimer. Heterotetramer of two MnmE and two MnmG subunits. FAD is required as a cofactor.

It is found in the cytoplasm. In terms of biological role, NAD-binding protein involved in the addition of a carboxymethylaminomethyl (cmnm) group at the wobble position (U34) of certain tRNAs, forming tRNA-cmnm(5)s(2)U34. The polypeptide is tRNA uridine 5-carboxymethylaminomethyl modification enzyme MnmG (Bacteroides fragilis (strain YCH46)).